The sequence spans 188 residues: MTATSPYLELGYVARAHGLRGEVAIRALDPASETLDTVDRIWVRTRAGVEREMRLEALRPTPKEDIVVLEGVESRNDAEALVGAKVFVFREDLEPPAEGEFFQGDLVGLDAVDANGNALGRVEEIWTTGEVPNLVIRASGREELVVPFADEFVPTVDLEARRIVIHPPEYVEAGRKGAESGGGPEDAE.

One can recognise a PRC barrel domain in the interval 98–171 (EGEFFQGDLV…RIVIHPPEYV (74 aa)).

This sequence belongs to the RimM family. As to quaternary structure, binds ribosomal protein uS19.

It localises to the cytoplasm. Functionally, an accessory protein needed during the final step in the assembly of 30S ribosomal subunit, possibly for assembly of the head region. Essential for efficient processing of 16S rRNA. May be needed both before and after RbfA during the maturation of 16S rRNA. It has affinity for free ribosomal 30S subunits but not for 70S ribosomes. This Myxococcus xanthus (strain DK1622) protein is Ribosome maturation factor RimM.